Consider the following 1052-residue polypeptide: MASRGGDGLVGGGRGPLGGRDGRGRGPAGGRGGGRGGGHPQQQQQQQPGYGRGDGGGRGPAPAAGGVVGRGTGGGGGGGRGDGGRGRGRGGGGGDGVRPAMAAAPAASTPGPVAVAARSTPPPTPAVQIPAVASSSSAQPAAAAQPPPAAAAVSALARDVGRQLAVVAGGGRPAPPAAPPAPIPVSSKGVAPPSRPGFGTVGERIVVRANHFLVRVSDNDMIYLYDVSLSPPPKTRRINRVVMSELARLHRESHLGGISFAYDGSKALYTAGKLPFDSMDFKIKLGKELREIEYKVTIRRAGQADLHHLHEFIAGRQRDSQQQTIQALDVVLRESPSLNYVIVSRSFYSTMFGRQDIGDGLECWKGYYQSLRPTQMGLSLNIDISSTPFFKPISVVEYVKNCLGTPTNANGPDPRRPLSDIDRLKVKKALRGVRVETTHQGKSSKYKITTITSEPLSQLNFSMDGTTQTVIQYFSQRYKYRLQYTSWPCLQSGNPSNPIYLPMEVCTIVEGQRYSKKLNDKQVTGLLRATCQPPQKREQKIIEMVQHNNYPADKVVSDFRINISNQMATMPARVLPAPTLRYHDSGKEKTCNPRVGQWNMINKKMVGGAVVQKWTCVNFSRMHIDAVHRLCGELVYTCNAIGMVFNEMPEIEVGSAAPNNIEAALSNIHTRAPQLQLLIVILPDVNGYYGRIKRVCETELGIVSQCLKPGRKLLSLDRQFLENVSLKINVKAGGRNSVLQRPLVPGGLENTTIIFGADVTHPASGEDSSASIAAVVASMDWPEITKYKALVSAQPPRQEIIQDLFTMTEVAQNADAPAQKAEGSKKNFICGGMFRELLMSFYSKNAKRKPQRIIFYRDGVSDGQFLHVLLYEMDAIKKAIASLDPAYRPLVTFVVVQKRHHTRLFPEVHGRQDLTDRSGNVRPGTVVDTNICHPSEFDFYLCSHAGIQGTSRPTHYHVLHDENRFSADQLQMLTYNLCYTYARCTRSVSVVPPAYYAHLAAFRARYYDEPPAMDGASSVGSGGNQAAAGGQPPAVRRLPQIKENVKDVMFYC.

The segment covering 1–39 (MASRGGDGLVGGGRGPLGGRDGRGRGPAGGRGGGRGGGH) has biased composition (gly residues). 2 disordered regions span residues 1–127 (MASR…TPAV) and 170–194 (GGRP…APPS). Residues 40–49 (PQQQQQQQPG) show a composition bias toward low complexity. 2 stretches are compositionally biased toward gly residues: residues 50–59 (YGRGDGGGRG) and 66–81 (GVVG…GGRG). Low complexity predominate over residues 97 to 117 (VRPAMAAAPAASTPGPVAVAA). Over residues 173–183 (PAPPAAPPAPI) the composition is skewed to pro residues. Residues 394 to 510 (SVVEYVKNCL…LPMEVCTIVE (117 aa)) enclose the PAZ domain. Residues 677 to 1009 (LLIVILPDVN…AAFRARYYDE (333 aa)) enclose the Piwi domain.

This sequence belongs to the argonaute family. Ago subfamily. As to expression, expressed in seeds.

Probably involved in the RNA silencing pathway. May bind to short RNAs such as microRNAs (miRNAs) or short interfering RNAs (siRNAs), and represses the translation of mRNAs which are complementary to them. This chain is Protein argonaute 14 (AGO14), found in Oryza sativa subsp. japonica (Rice).